The sequence spans 427 residues: 3-phosphoshikimate 1-carboxyvinyltransferase (427 aa).

Positions 22, 23, and 27 each coordinate 3-phosphoshikimate. Lys-22 lines the phosphoenolpyruvate pocket. Residues Gly-96 and Arg-124 each contribute to the phosphoenolpyruvate site. 3-phosphoshikimate-binding residues include Ser-169, Ser-170, Gln-171, Ser-197, Asp-313, Asn-336, and Lys-340. Residue Gln-171 coordinates phosphoenolpyruvate. Catalysis depends on Asp-313, which acts as the Proton acceptor. Residues Arg-344, Arg-386, and Lys-411 each coordinate phosphoenolpyruvate.

This sequence belongs to the EPSP synthase family. As to quaternary structure, monomer.

Its subcellular location is the cytoplasm. It carries out the reaction 3-phosphoshikimate + phosphoenolpyruvate = 5-O-(1-carboxyvinyl)-3-phosphoshikimate + phosphate. Its pathway is metabolic intermediate biosynthesis; chorismate biosynthesis; chorismate from D-erythrose 4-phosphate and phosphoenolpyruvate: step 6/7. Its function is as follows. Catalyzes the transfer of the enolpyruvyl moiety of phosphoenolpyruvate (PEP) to the 5-hydroxyl of shikimate-3-phosphate (S3P) to produce enolpyruvyl shikimate-3-phosphate and inorganic phosphate. The sequence is that of 3-phosphoshikimate 1-carboxyvinyltransferase from Klebsiella pneumoniae subsp. pneumoniae (strain ATCC 700721 / MGH 78578).